Here is a 1851-residue protein sequence, read N- to C-terminus: Chitin synthase (1851 aa).

Residues 1-21 (MQYHQHQHQFPGPGPSHTSVY) are disordered. Over 1–108 (MQYHQHQHQF…KDTLYNGFLQ (108 aa)) the chain is Cytoplasmic. A helical transmembrane segment spans residues 109–129 (VLKMITFVALFVTTLGSSILA). Residues 130-168 (KLSLLVMAAGLGQAGHNISICPDKIPESPKNSVLISPKN) are Extracellular-facing. An N-linked (GlcNAc...) asparagine glycan is attached at Asn-146. The helical transmembrane segment at 169-189 (AAKWAWALLLAICIPELLCFA) threads the bilayer. Residues 190-208 (RSLHRSLFRKVRGPSFLQF) lie on the Cytoplasmic side of the membrane. Residues 209–229 (LLVFTVESVHAFGLGALVFAI) form a helical membrane-spanning segment. At 230–234 (MPRGM) the chain is on the extracellular side. A helical transmembrane segment spans residues 235-255 (VITMLQLGNSLCLIPSLLLPL). Topologically, residues 256 to 261 (SRSRSR) are cytoplasmic. Residues 262-282 (WLPLLLLLDGSAILAQSSAAI) form a helical membrane-spanning segment. Residues 283–291 (WRGSIPLER) are Extracellular-facing. The chain crosses the membrane as a helical span at residues 292 to 312 (FGFVFLCTSLISIAWWQNFVH). Over 313-337 (PHSFLPATRFFAHYAAKLRECRSKT) the chain is Cytoplasmic. A helical membrane pass occupies residues 338–358 (FVVLSPWKCLIFTFCMFQFVP). Residues 359 to 544 (PQIPFRELLQ…ELNQFTTAND (186 aa)) lie on the Extracellular side of the membrane. Residues Asn-385 and Asn-435 are each glycosylated (N-linked (GlcNAc...) asparagine). Positions 432-522 (LFRNGTRRPP…DADEQEEEEE (91 aa)) are disordered. Basic and acidic residues predominate over residues 442-454 (KKEEVKKNKMDSK). Residues 455-465 (KKTKKLKKKKG) show a composition bias toward basic residues. Positions 466–478 (GNNNATSTNSSEK) are enriched in low complexity. Residues Asn-469 and Asn-474 are each glycosylated (N-linked (GlcNAc...) asparagine). Residues 513–522 (DADEQEEEEE) are compositionally biased toward acidic residues. The helical transmembrane segment at 545-565 (ALWLVFVQAGSVLLCQLCAKF) threads the bilayer. Over 566 to 573 (ACKVVMQR) the chain is Cytoplasmic. The helical transmembrane segment at 574–594 (VGLALPVVLSIPFGILFLAYS) threads the bilayer. The Extracellular segment spans residues 595–631 (CRQKATNPCHLSEWMSKELFWQCPTRPFHWQRFFREQ). A helical transmembrane segment spans residues 632 to 652 (PNLLWLCWWLSQCWITIHLWL). Topologically, residues 653-1124 (PRQERLAKSE…VSIWYIAYQL (472 aa)) are cytoplasmic. A disordered region spans residues 693 to 718 (SEDIDTEEEANEGGGEQEDGNSSTHT). The span at 696–711 (IDTEEEANEGGGEQED) shows a compositional bias: acidic residues. Residues 1125–1145 (VMLFSSVLGPGTIFLMIVGAI) traverse the membrane as a helical segment. The Extracellular segment spans residues 1146–1154 (SISFNIDTR). A helical transmembrane segment spans residues 1155–1175 (LALLIVTTPVLCFCVCCLTCG). The Cytoplasmic segment spans residues 1176–1179 (TETQ). A helical transmembrane segment spans residues 1180-1200 (LLLAQVIGALFAMLMTAVIVG). The Extracellular segment spans residues 1201 to 1209 (TSLQIQKDG). The chain crosses the membrane as a helical span at residues 1210–1230 (LLSPHSIFLFTVLGSWSFSAL). The Cytoplasmic segment spans residues 1231-1235 (LHPLE). A helical membrane pass occupies residues 1236–1256 (FGCLLPCGLYFLAIPCMYMLL). The Extracellular portion of the chain corresponds to 1257–1461 (PVYSLCNLNT…QRGLNELRNT (205 aa)). A glycan (N-linked (GlcNAc...) asparagine) is linked at Asn-1274. Positions 1329 to 1383 (CADETVEVRKLDENFRKIERKLQSLERRTNGQGNNAEEEGKEEEETGKSEQERKE) form a coiled coil. The disordered stretch occupies residues 1350–1402 (LQSLERRTNGQGNNAEEEGKEEEETGKSEQERKEGREEGKEEEGKMSKRKKEE). A compositionally biased stretch (acidic residues) spans 1364–1373 (AEEEGKEEEE). Basic and acidic residues predominate over residues 1374 to 1402 (TGKSEQERKEGREEGKEEEGKMSKRKKEE). A helical membrane pass occupies residues 1462–1482 (CCSAFFMVNIVFIIVVLVLQL). At 1483 to 1527 (QKDCLHIEWPLGPLVNQTRVQCGGGGGRDFEGEEWIMSRLQLEPM) the chain is on the cytoplasmic side. A helical membrane pass occupies residues 1528-1548 (GFVFIVFFLIILFIQFLAMLF). Over 1549-1851 (HRFGTFTHII…FLGTTNKRAK (303 aa)) the chain is Extracellular. A disordered region spans residues 1626–1658 (GKRQQNAQIPPRCEKGGNERGEESPTSLPAPPV). Basic and acidic residues predominate over residues 1637–1648 (RCEKGGNERGEE). The N-linked (GlcNAc...) asparagine glycan is linked to Asn-1660. The disordered stretch occupies residues 1765 to 1851 (HSIFPSSSES…FLGTTNKRAK (87 aa)). Over residues 1781–1822 (GGGRGRGREQERDKCLEGKKEKFRQRVEEGPARCHRLEELFG) the composition is skewed to basic and acidic residues. Over residues 1823 to 1834 (KSRKGGPQKRGK) the composition is skewed to basic residues.

This sequence belongs to the chitin synthase family. Class IV subfamily. Post-translationally, may require proteolytic cleavage for activation.

Its subcellular location is the cell membrane. The enzyme catalyses [(1-&gt;4)-N-acetyl-beta-D-glucosaminyl](n) + UDP-N-acetyl-alpha-D-glucosamine = [(1-&gt;4)-N-acetyl-beta-D-glucosaminyl](n+1) + UDP + H(+). In terms of biological role, required for the synthesis of chitin. The chain is Chitin synthase from Meloidogyne artiellia (British root-knot nematode).